Reading from the N-terminus, the 340-residue chain is Zinc finger protein 488 (340 aa).

Positions 72 to 187 (AELALLVAPG…SVFPAGESAD (116 aa)) are important for transcriptional repression activity. Positions 77-180 (LVAPGKPRPG…AERPELTSVF (104 aa)) are disordered. Residues 82–91 (KPRPGKPLPP) are compositionally biased toward pro residues. Residues 106 to 125 (PRMKDRQVDAQAQEREHDDP) show a composition bias toward basic and acidic residues. 2 C2H2-type zinc fingers span residues 275-302 (NWCAKCNLSFRLTSDLVFHMRSHHKKEH) and 317-339 (LACPVCQEHFRERHHLSRHMTSH). Positions 298–305 (HKKEHAGP) match the Nuclear localization signal motif.

Belongs to the krueppel C2H2-type zinc-finger protein family. As to quaternary structure, interacts with OLIG2.

Its subcellular location is the nucleus. Its function is as follows. Transcriptional repressor. Plays a role in oligodendrocyte differentiation, together with OLIG2. Mediates Notch signaling-activated formation of oligodendrocyte precursors. Promotes differentiation of adult neural stem progenitor cells (NSPCs) into mature oligodendrocytes and contributes to remyelination following nerve injury. This is Zinc finger protein 488 (ZNF488) from Homo sapiens (Human).